A 1204-amino-acid polypeptide reads, in one-letter code: ATP-dependent helicase/nuclease subunit A (1204 aa).

The region spanning 2–472 (PQFTKEQEKA…ILLSDNFRST (471 aa)) is the UvrD-like helicase ATP-binding domain. 23–30 (ASAGSGKT) contributes to the ATP binding site. Residues 500–783 (GQLIFGAKYY…RLMTIHGSKG (284 aa)) enclose the UvrD-like helicase C-terminal domain.

The protein belongs to the helicase family. AddA subfamily. Heterodimer of AddA and AddB/RexB. Requires Mg(2+) as cofactor.

The catalysed reaction is Couples ATP hydrolysis with the unwinding of duplex DNA by translocating in the 3'-5' direction.. The enzyme catalyses ATP + H2O = ADP + phosphate + H(+). The heterodimer acts as both an ATP-dependent DNA helicase and an ATP-dependent, dual-direction single-stranded exonuclease. Recognizes the chi site generating a DNA molecule suitable for the initiation of homologous recombination. The AddA nuclease domain is required for chi fragment generation; this subunit has the helicase and 3' -&gt; 5' nuclease activities. In Lactobacillus helveticus (strain DPC 4571), this protein is ATP-dependent helicase/nuclease subunit A.